A 440-amino-acid chain; its full sequence is MSYSLYLAFVCLNLLAQRMCIQGNQFNVEVSRSDKLSLPGFENLTAGYNKFLRPNFGGDPVRIALTLDIASISSISESNMDYTATIYLRQRWTDPRLVFEGNKSFTLDARLVEFLWVPDTYIVESKKSFLHEVTVGNRLIRLFSNGTVLYALRITTTVTCNMDLSKYPMDTQTCKLQLESWGYDGNDVEFSWLRGNDSVRGLENLRLAQYTIQQYFTLVTVSQQETGNYTRLVLQFELRRNVLYFILETYVPSTFLVVLSWVSFWISLESVPARTCIGVTTVLSMTTLMIGSRTSLPNTNCFIKAIDVYLGICFSFVFGALLEYAVAHYSSLQQMAVKDRGPAKDSEEVNITNIINSSISSFKRKISFASIEISGDNVNYSDLTMKASDKFKFVFREKIGRIIDYFTIQNPSNVDRYSKLLFPLIFMLANVFYWAYYMYF.

Residues 1-23 (MSYSLYLAFVCLNLLAQRMCIQG) form the signal peptide. Topologically, residues 24–241 (NQFNVEVSRS…LVLQFELRRN (218 aa)) are extracellular. Asn-43, Asn-102, and Asn-145 each carry an N-linked (GlcNAc...) asparagine glycan. Cysteines 160 and 174 form a disulfide. N-linked (GlcNAc...) asparagine glycans are attached at residues Asn-196 and Asn-228. Residues 242–262 (VLYFILETYVPSTFLVVLSWV) form a helical membrane-spanning segment. Topologically, residues 263 to 270 (SFWISLES) are cytoplasmic. The helical transmembrane segment at 271 to 290 (VPARTCIGVTTVLSMTTLMI) threads the bilayer. Residues 291 to 301 (GSRTSLPNTNC) are Extracellular-facing. A helical membrane pass occupies residues 302–322 (FIKAIDVYLGICFSFVFGALL). Over 323-419 (EYAVAHYSSL…NPSNVDRYSK (97 aa)) the chain is Cytoplasmic. The chain crosses the membrane as a helical span at residues 420–440 (LLFPLIFMLANVFYWAYYMYF).

The protein belongs to the ligand-gated ion channel (TC 1.A.9) family. Gamma-aminobutyric acid receptor (TC 1.A.9.5) subfamily. GABRP sub-subfamily. As to quaternary structure, heteropentamer, formed by a combination of alpha (GABRA1-6), beta (GABRB1-3), gamma (GABRG1-3), delta (GABRD), epsilon (GABRE), rho (GABRR1-3), pi (GABRP) and theta (GABRQ) chains, each subunit exhibiting distinct physiological and pharmacological properties. Expressed in lungs, in alveolar epithelium.

Its subcellular location is the cell membrane. It localises to the apical cell membrane. The catalysed reaction is chloride(in) = chloride(out). Pi subunit of the heteropentameric ligand-gated chloride channel gated by gamma-aminobutyric acid (GABA). GABA-gated chloride channels, also named GABA(A) receptors (GABAAR), consist of five subunits arranged around a central pore and contain GABA active binding site(s) located at the alpha and beta subunit interfaces. When activated by GABA, GABAARs selectively allow the flow of chloride anions across the cell membrane down their electrochemical gradient. Pi-containing GABAARs are mostly located in peripheral tissues. In the uterus, pi subunits modulate uterus contraction by altering the sensitivity of GABAARs to pregnanolone. In the lungs, pi-containing GABAARs contribute to pulmonary fluid transport via luminal secretion of chloride. The polypeptide is Gamma-aminobutyric acid receptor subunit pi (Rattus norvegicus (Rat)).